Consider the following 924-residue polypeptide: Protein SMAX1-LIKE 2 (924 aa).

The 174-residue stretch at 8–181 (IQQTLTPEAA…SAIEQSLIGN (174 aa)) folds into the Clp R domain. Positions 12–83 (LTPEAATVLN…LCFSVALERL (72 aa)) are repeat 1. A compositionally biased stretch (low complexity) spans 86-105 (TSTTTTTTSSSSSSSPSQTQ). Positions 86-107 (TSTTTTTTSSSSSSSPSQTQEP) are disordered. Residues 109–181 (LSNALTAALK…SAIEQSLIGN (73 aa)) form a repeat 2 region. Residues 522-552 (TRSDITPPGSPVGTDLVLGRPNRGLSSPEKK) are disordered. Positions 780 to 784 (FDLNE) match the EAR motif.

The protein belongs to the ClpA/ClpB family. Interacts probably with TPL/TPR in an EAR-motif dependent manner. Expressed in seedlings and leaves. Detected in roots and axillary branches.

Its function is as follows. Probable component of a transcriptional corepressor complex that acts specifically in the karrikin pathway. Controls seedling growth redundantly with SMAX1, but is not involved in leaf morphology, shoot branching or germination control. The chain is Protein SMAX1-LIKE 2 from Arabidopsis thaliana (Mouse-ear cress).